Reading from the N-terminus, the 1097-residue chain is DNA-directed RNA polymerase subunit beta (1097 aa).

The segment at 1072 to 1097 (QDINPRRNTPSRPTYESLGTSEYEED) is disordered. A compositionally biased stretch (polar residues) spans 1077–1091 (RRNTPSRPTYESLGT).

It belongs to the RNA polymerase beta chain family. In terms of assembly, in cyanobacteria the RNAP catalytic core is composed of 2 alpha, 1 beta, 1 beta', 1 gamma and 1 omega subunit. When a sigma factor is associated with the core the holoenzyme is formed, which can initiate transcription.

The catalysed reaction is RNA(n) + a ribonucleoside 5'-triphosphate = RNA(n+1) + diphosphate. Its function is as follows. DNA-dependent RNA polymerase catalyzes the transcription of DNA into RNA using the four ribonucleoside triphosphates as substrates. This Prochlorococcus marinus (strain MIT 9301) protein is DNA-directed RNA polymerase subunit beta.